The following is a 683-amino-acid chain: Probable serine/threonine-protein kinase HAL5-like (683 aa).

2 disordered regions span residues 1–90 (MPQQ…VSDE) and 157–200 (YPQN…SKKA). The segment covering 36–48 (PSSAATSDSSEMS) has biased composition (low complexity). Residues 50–60 (AQGGRGNGLLG) are compositionally biased toward gly residues. Polar residues predominate over residues 69-85 (SPKSEAQFTQRNKSAES). A Protein kinase domain is found at 364-670 (GKCIGMIGQG…IPKLLDTPWM (307 aa)). Residues 370–378 (IGQGAYGTV) and K411 each bind ATP. D521 (proton acceptor) is an active-site residue.

Belongs to the protein kinase superfamily. CAMK Ser/Thr protein kinase family. NPR/HAL subfamily. HAL5 sub-subfamily.

The catalysed reaction is L-seryl-[protein] + ATP = O-phospho-L-seryl-[protein] + ADP + H(+). It catalyses the reaction L-threonyl-[protein] + ATP = O-phospho-L-threonyl-[protein] + ADP + H(+). This is Probable serine/threonine-protein kinase HAL5-like from Eremothecium gossypii (strain ATCC 10895 / CBS 109.51 / FGSC 9923 / NRRL Y-1056) (Yeast).